A 537-amino-acid chain; its full sequence is Phosphoenolpyruvate carboxykinase (ATP) (537 aa).

Residues Arg61, Tyr195, and Lys201 each coordinate substrate. ATP-binding positions include Lys201, His220, and 236–244; that span reads GLSGTGKTT. Residues Lys201 and His220 each coordinate Mn(2+). Mn(2+) is bound at residue Asp257. Glu285, Arg323, and Thr448 together coordinate ATP. Residue Arg323 coordinates substrate.

Belongs to the phosphoenolpyruvate carboxykinase (ATP) family. The cofactor is Mn(2+).

The protein localises to the cytoplasm. The enzyme catalyses oxaloacetate + ATP = phosphoenolpyruvate + ADP + CO2. It functions in the pathway carbohydrate biosynthesis; gluconeogenesis. Functionally, involved in the gluconeogenesis. Catalyzes the conversion of oxaloacetate (OAA) to phosphoenolpyruvate (PEP) through direct phosphoryl transfer between the nucleoside triphosphate and OAA. This chain is Phosphoenolpyruvate carboxykinase (ATP), found in Azorhizobium caulinodans (strain ATCC 43989 / DSM 5975 / JCM 20966 / LMG 6465 / NBRC 14845 / NCIMB 13405 / ORS 571).